Reading from the N-terminus, the 3461-residue chain is Reelin (3461 aa).

The first 26 residues, 1–26 (MERGCWAPRALVLAVLLLLATLRARA), serve as a signal peptide directing secretion. Residues 27 to 191 (ATGYYPRFSP…GAPTEATAYS (165 aa)) enclose the Reelin domain. Residues C41 and C127 are joined by a disulfide bond. An N-linked (GlcNAc...) asparagine glycan is attached at N141. A disulfide bond links C155 and C179. N-linked (GlcNAc...) asparagine glycans are attached at residues N258, N290, and N306. Residues C540 and C581 are joined by a disulfide bond. The stretch at 593-604 (EFSTNHGRSWSL) is one BNR 1 repeat. A disulfide bridge links C609 with C614. N-linked (GlcNAc...) asparagine glycosylation is present at N629. The EGF-like 1 domain occupies 671-702 (IGPSCLKFCSGRGQCTRHGCKCDPGFSGPACE). 2 disulfides stabilise this stretch: C675–C685 and C692–C701. Residues 799-810 (HYSYDNGITWKL) form a BNR 2 repeat. C895 and C937 are joined by a disulfide. The stretch at 952-963 (EYSANHGLTWHL) is one BNR 3 repeat. Cystine bridges form between C968–C975, C1034–C1044, and C1051–C1060. One can recognise an EGF-like 2 domain in the interval 1030 to 1061 (IGQQCPNMCSGHGSCDHGVCRCDQGYQGTECH). The BNR 4 repeat unit spans residues 1157 to 1168 (QYSNNGGIQWHL). The N-linked (GlcNAc...) asparagine glycan is linked to N1267. The stretch at 1323–1334 (QYSHDAGMSWFL) is one BNR 5 repeat. 4 disulfides stabilise this stretch: C1339–C1348, C1413–C1423, C1417–C1428, and C1430–C1441. The EGF-like 3 domain maps to 1409 to 1442 (ISEPCPSYCSGHGDCISGVCFCDLGYTAAQGTCV). N-linked (GlcNAc...) asparagine glycosylation is present at N1447. A disulfide bridge links C1475 with C1522. Residues 1535–1546 (QYSNDNGILWHL) form a BNR 6 repeat. Residue N1600 is glycosylated (N-linked (GlcNAc...) asparagine). A disulfide bridge links C1633 with C1673. Residues 1686 to 1697 (QYSLNNGKDWQL) form a BNR 7 repeat. The cysteines at positions 1702 and 1709 are disulfide-linked. A glycan (N-linked (GlcNAc...) asparagine) is linked at N1750. The EGF-like 4 domain occupies 1765–1796 (LASGCPWMCSGRGICDSGRCVCDRGFGGPFCV). Residues 1884–1895 (QFSVSGGVTWHL) form a BNR 8 repeat. The N-linked (GlcNAc...) asparagine glycan is linked to N1921. A disulfide bridge connects residues C1983 and C2030. A BNR 9 repeat occupies 2043 to 2054 (EFSRDFGATWHL). C2059 and C2070 are oxidised to a cystine. Zn(2+) is bound by residues H2061 and H2074. The EGF-like 5 domain occupies 2129–2161 (IGPQCEEMCYGHGSCINGTKCICDPGYSGPTCK). Disulfide bonds link C2133–C2143, C2137–C2149, and C2151–C2160. N2145 carries an N-linked (GlcNAc...) asparagine glycan. Residue E2179 participates in Zn(2+) binding. A disulfide bridge connects residues C2195 and C2235. The BNR 10 repeat unit spans residues 2250–2261 (QYSLNGGLSWSL). E2264 is a binding site for Zn(2+). N2269 and N2317 each carry an N-linked (GlcNAc...) asparagine glycan. 6 disulfide bridges follow: C2348/C2387, C2393/C2559, C2482/C2492, C2486/C2497, C2499/C2508, and C2544/C2584. Zn(2+) is bound by residues E2397, E2399, and H2460. One copy of the BNR 11 repeat lies at 2399-2410 (EYSVDLGLSWHP). Positions 2478–2509 (IGDGCLDMCSGHGRCVQGSCVCDEQWGGLYCD) constitute an EGF-like 6 domain. N2569 is a glycosylation site (N-linked (GlcNAc...) asparagine). BNR repeat units follow at residues 2598–2609 (EYSVNGGITWNL) and 2778–2789 (QFSTDFGVSWSY). Residues C2794 and C2801 are joined by a disulfide bond. Residues 2853–2884 (LGPGCLDNCGGHGDCLKEQCICDPGYSGPNCY) form the EGF-like 7 domain. A disulfide bond links C2919 and C2966. An N-linked (GlcNAc...) asparagine glycan is attached at N2962. Residues 2979–2990 (DFSTDGGITWTL) form a BNR 14 repeat. N-linked (GlcNAc...) asparagine glycans are attached at residues N3016 and N3073. The stretch at 3143–3155 (EYTKDARSDSWQL) is one BNR 15 repeat. Cysteines 3160 and 3170 form a disulfide. N-linked (GlcNAc...) asparagine glycosylation occurs at N3185. In terms of domain architecture, EGF-like 8 spans 3228–3260 (IGEACPKLCSGHGYCTTGAVCICDESFQGDDCS). Disulfide bonds link C3232-C3242, C3236-C3248, C3250-C3259, and C3296-C3346. One copy of the BNR 16 repeat lies at 3363–3374 (QYSVNNGITWHV). N-linked (GlcNAc...) asparagine glycosylation is found at N3412 and N3439.

It belongs to the reelin family. In terms of assembly, oligomer of disulfide-linked homodimers. In terms of processing, N-glycosylated and to a lesser extent also O-glycosylated. In terms of tissue distribution, the major isoform 1 is neuron-specific. It is abundantly produced during brain ontogenesis by the Cajal-Retzius cells and other pioneer neurons located in the telencephalic marginal zone and by granule cells of the external granular layer of the cerebellum. Expression is located in deeper layers in the developing hippocampus and olfactory bulb, low levels of expression are also detected in the immature striatum. At early developmental stages, expressed also in hypothalamic differentiation fields, tectum and spinal cord. A moderate to low level of expression occurs in the septal area, striatal fields, habenular nuclei, some thalamic nuclei, particularly the lateral geniculate, the retina and some nuclei of the reticular formation in the central field of the medulla. Very low levels found in liver and kidney. No expression in radial glial cells, cortical plate, Purkinje cells and inferior olivary neurons. The minor isoform 2 is only expressed in non neuronal cells. The minor isoform 3 is found in the same cells as isoform 1, but is almost undetectable in retina and brain stem.

The protein localises to the secreted. It is found in the extracellular space. Its subcellular location is the extracellular matrix. Its function is as follows. Extracellular matrix serine protease secreted by pioneer neurons that plays a role in layering of neurons in the cerebral cortex and cerebellum by coordinating cell positioning during neurodevelopment. Regulates microtubule function in neurons and neuronal migration. Binding to the extracellular domains of lipoprotein receptors VLDLR and LRP8/APOER2 induces tyrosine phosphorylation of DAB1 and modulation of TAU phosphorylation. Affects migration of sympathetic preganglionic neurons in the spinal cord, where it seems to act as a barrier to neuronal migration. Enzymatic activity is important for the modulation of cell adhesion. In Mus musculus (Mouse), this protein is Reelin (Reln).